Reading from the N-terminus, the 164-residue chain is Phosphopantetheine adenylyltransferase (164 aa).

Thr-14 is a binding site for substrate. ATP-binding positions include 14–15 and His-22; that span reads TF. Substrate contacts are provided by Lys-46, Met-78, and Arg-92. ATP-binding positions include 93–95, Glu-103, and 128–134; these read GLR and HAFISST.

This sequence belongs to the bacterial CoaD family. Homohexamer. The cofactor is Mg(2+).

The protein localises to the cytoplasm. It catalyses the reaction (R)-4'-phosphopantetheine + ATP + H(+) = 3'-dephospho-CoA + diphosphate. The protein operates within cofactor biosynthesis; coenzyme A biosynthesis; CoA from (R)-pantothenate: step 4/5. Its function is as follows. Reversibly transfers an adenylyl group from ATP to 4'-phosphopantetheine, yielding dephospho-CoA (dPCoA) and pyrophosphate. This chain is Phosphopantetheine adenylyltransferase, found in Vibrio vulnificus (strain CMCP6).